We begin with the raw amino-acid sequence, 272 residues long: Shikimate dehydrogenase (NADP(+)) (272 aa).

Shikimate contacts are provided by residues 16 to 18 (SLS) and T63. The active-site Proton acceptor is K67. Residue E79 coordinates NADP(+). N88 and D103 together coordinate shikimate. NADP(+)-binding positions include 127-131 (GAGGA), 151-156 (NRTMSR), and I212. Y214 is a shikimate binding site. G235 lines the NADP(+) pocket.

The protein belongs to the shikimate dehydrogenase family. As to quaternary structure, homodimer.

The catalysed reaction is shikimate + NADP(+) = 3-dehydroshikimate + NADPH + H(+). It participates in metabolic intermediate biosynthesis; chorismate biosynthesis; chorismate from D-erythrose 4-phosphate and phosphoenolpyruvate: step 4/7. Its function is as follows. Involved in the biosynthesis of the chorismate, which leads to the biosynthesis of aromatic amino acids. Catalyzes the reversible NADPH linked reduction of 3-dehydroshikimate (DHSA) to yield shikimate (SA). This is Shikimate dehydrogenase (NADP(+)) from Staphylococcus epidermidis (strain ATCC 12228 / FDA PCI 1200).